We begin with the raw amino-acid sequence, 354 residues long: Guanine nucleotide-binding protein G(o) subunit alpha (354 aa).

Glycine 2 carries the N-myristoyl glycine lipid modification. The S-palmitoyl cysteine moiety is linked to residue cysteine 3. One can recognise a G-alpha domain in the interval 32–354 (KDIKLLLLGA…ANNLRGCGLY (323 aa)). Residues 35–48 (KLLLLGAGESGKST) are G1 motif. Residues 40–47 (GAGESGKS), 176–182 (LRTRVKT), 201–205 (DVGGQ), 270–273 (NKKD), and alanine 326 each bind GTP. Mg(2+) is bound by residues serine 47 and threonine 182. Residues 174–182 (DILRTRVKT) form a G2 motif region. Residues 197–206 (FKLFDVGGQR) form a G3 motif region. Residues 266 to 273 (ILFLNKKD) are G4 motif. The segment at 324–329 (TCATDT) is G5 motif.

Belongs to the G-alpha family. G(i/o/t/z) subfamily. In terms of assembly, g proteins are composed of 3 units; alpha, beta and gamma. The alpha chain contains the guanine nucleotide binding site.

Functionally, guanine nucleotide-binding proteins (G proteins) are involved as modulators or transducers in various transmembrane signaling systems. The G(o) protein function is not clear. The protein is Guanine nucleotide-binding protein G(o) subunit alpha of Locusta migratoria (Migratory locust).